A 311-amino-acid chain; its full sequence is Aspartate carbamoyltransferase catalytic subunit (311 aa).

Carbamoyl phosphate-binding residues include R55 and T56. K85 serves as a coordination point for L-aspartate. Carbamoyl phosphate is bound by residues R106, H135, and Q138. The L-aspartate site is built by R168 and R230. The carbamoyl phosphate site is built by L268 and P269.

The protein belongs to the aspartate/ornithine carbamoyltransferase superfamily. ATCase family. As to quaternary structure, heterododecamer (2C3:3R2) of six catalytic PyrB chains organized as two trimers (C3), and six regulatory PyrI chains organized as three dimers (R2).

It catalyses the reaction carbamoyl phosphate + L-aspartate = N-carbamoyl-L-aspartate + phosphate + H(+). It functions in the pathway pyrimidine metabolism; UMP biosynthesis via de novo pathway; (S)-dihydroorotate from bicarbonate: step 2/3. Catalyzes the condensation of carbamoyl phosphate and aspartate to form carbamoyl aspartate and inorganic phosphate, the committed step in the de novo pyrimidine nucleotide biosynthesis pathway. In Cronobacter sakazakii (strain ATCC BAA-894) (Enterobacter sakazakii), this protein is Aspartate carbamoyltransferase catalytic subunit.